A 617-amino-acid chain; its full sequence is Cell pattern formation-associated protein STUA (617 aa).

The segment at 1–79 (MNQPAADMYY…PASQMGQNVL (79 aa)) is disordered. A compositionally biased stretch (polar residues) spans 24-34 (TVTSGAMSYHS). Low complexity predominate over residues 45–58 (PQYAPQPQYSQYGY). Residues 61–76 (GLTSPQSAQPASQMGQ) are compositionally biased toward polar residues. The HTH APSES-type domain occupies 106 to 212 (RVTATLWEDE…HNIGALLYHP (107 aa)). A DNA-binding region (H-T-H motif) is located at residues 140–161 (GTKLLNVAGMTRGRRDGILKSE). Disordered regions lie at residues 223-274 (AAAE…MGRP), 300-451 (SDSG…DSGA), and 463-617 (APAV…PRRR). Composition is skewed to low complexity over residues 305-318 (QWAQGQGMGSAQGA) and 334-345 (PATPASTPPGTT). Polar residues-rich tracts occupy residues 346–361 (IQNMQSYQSGAQQYDN) and 368–382 (PSAQQSPYQATNPAS). The segment covering 438–447 (EHDHDAEYTH) has biased composition (basic and acidic residues). Residues 488-509 (PASGRATPRTAAAPQPYYSQQA) show a composition bias toward low complexity. Composition is skewed to polar residues over residues 519 to 533 (QQPSSNLYNVMSNDR) and 553 to 563 (SMSNGYASQMN). The interval 569 to 593 (KRGRDEDDDLQRPSSGGGMDLKRRK) is nuclear localization domain. Positions 599–617 (QVPAMAYAPPVMAQQPRRR) are enriched in low complexity.

Belongs to the EFG1/PHD1/stuA family.

It localises to the nucleus. In terms of biological role, transcription factor that regulates asexual reproduction. Binds the StuA-response elements (StRE) with the consensus sequence 5'-(A/T)CGCG(T/A)N(A/C)-3' at the promoters of target genes. Required for the formation of aerial hyphae, efficient conidiation, and the formation of perithecia. Essential for the generation of normal turgor pressure within the appressorium. Required for infection of intact apple fruit and penetration of onion epidermal cells. The protein is Cell pattern formation-associated protein STUA of Colletotrichum gloeosporioides (Anthracnose fungus).